The primary structure comprises 68 residues: Beta-defensin 1 (68 aa).

The signal sequence occupies residues 1-21; sequence MRTSYLLLFTLCLLLSEMASG. The propeptide occupies 22-32; the sequence is DNFLTGLGHRS. 3 disulfides stabilise this stretch: Cys37–Cys66, Cys44–Cys59, and Cys49–Cys67.

The protein belongs to the beta-defensin family. Monomer. Homodimer.

It is found in the secreted. Its subcellular location is the membrane. Its function is as follows. Has bactericidal activity. May act as a ligand for C-C chemokine receptor CCR6. Positively regulates the sperm motility and bactericidal activity in a CCR6-dependent manner. Binds to CCR6 and triggers Ca2+ mobilization in the sperm which is important for its motility. The chain is Beta-defensin 1 (DEFB1) from Macaca mulatta (Rhesus macaque).